Consider the following 475-residue polypeptide: Ribosomal protein uS12 methylthiotransferase RimO (475 aa).

The 115-residue stretch at 36-150 (NKINFISLGC…ILKAVQSTQK (115 aa)) folds into the MTTase N-terminal domain. Residues Cys45, Cys81, Cys113, Cys185, Cys189, and Cys192 each coordinate [4Fe-4S] cluster. Positions 171-403 (STPKHYAYLK…MQVQKKVVKK (233 aa)) constitute a Radical SAM core domain. The region spanning 406-475 (KKMIGKKIAV…ADYDLVGHVI (70 aa)) is the TRAM domain.

The protein belongs to the methylthiotransferase family. RimO subfamily. It depends on [4Fe-4S] cluster as a cofactor.

Its subcellular location is the cytoplasm. It carries out the reaction L-aspartate(89)-[ribosomal protein uS12]-hydrogen + (sulfur carrier)-SH + AH2 + 2 S-adenosyl-L-methionine = 3-methylsulfanyl-L-aspartate(89)-[ribosomal protein uS12]-hydrogen + (sulfur carrier)-H + 5'-deoxyadenosine + L-methionine + A + S-adenosyl-L-homocysteine + 2 H(+). In terms of biological role, catalyzes the methylthiolation of an aspartic acid residue of ribosomal protein uS12. The polypeptide is Ribosomal protein uS12 methylthiotransferase RimO (Protochlamydia amoebophila (strain UWE25)).